A 458-amino-acid polypeptide reads, in one-letter code: Monomethylamine methyltransferase MtmB1 (458 aa).

Pyl202 is a non-standard amino acid (pyrrolysine).

This sequence belongs to the monomethylamine methyltransferase family.

The enzyme catalyses Co(I)-[methylamine-specific corrinoid protein] + methylamine + H(+) = methyl-Co(III)-[methylamine-specific corrinoid protein] + NH4(+). Its pathway is one-carbon metabolism; methanogenesis from methylamine. Functionally, catalyzes the transfer of the methyl group from monomethylamine to the corrinoid cofactor of MtmC. The chain is Monomethylamine methyltransferase MtmB1 (mtmB1) from Methanosarcina barkeri (strain Fusaro / DSM 804).